Reading from the N-terminus, the 172-residue chain is Translationally-controlled tumor protein (172 aa).

Residues 1–172 (MIIYRDLISH…FKDGLEMEKC (172 aa)) enclose the TCTP domain. A phosphoserine mark is found at Ser-46 and Ser-53. Phosphoserine; by PLK1 is present on Ser-64. The tract at residues 70–172 (VDIVMNHHLQ…FKDGLEMEKC (103 aa)) is required for reduction of TSC22D1 protein stability.

The protein belongs to the TCTP family. As to quaternary structure, homodimer. Interacts with STEAP3. Interacts with TSC22D1; interaction results in the destabilization of TSC22D1 protein.

The protein localises to the cytoplasm. In terms of biological role, involved in calcium binding and microtubule stabilization. Acts as a negative regulator of TSC22D1-mediated apoptosis, via interaction with and destabilization of TSC22D1 protein. The protein is Translationally-controlled tumor protein (Tpt1) of Mus musculus (Mouse).